We begin with the raw amino-acid sequence, 1117 residues long: Endogenous retrovirus group K member 9 Pol protein (1117 aa).

Glycine 2 carries N-myristoyl glycine lipidation. Residues 58–195 (KDWKRIGKEL…AGQVPVTLQP (138 aa)) form the Reverse transcriptase domain. Residues 165-264 (GKGPELVGPS…APPSRQGSEL (100 aa)) form a disordered region. Residues 232–247 (GMPPAPQGRAPYPQPP) are compositionally biased toward pro residues. 2 CCHC-type zinc fingers span residues 544 to 561 (GKCY…NCPV) and 580 to 597 (DLCP…QCRS). The tract at residues 598-629 (KFDKNGQPLSGNEQRGQPQAPQQTGAFPIQPF) is disordered. A compositionally biased stretch (polar residues) spans 604 to 622 (QPLSGNEQRGQPQAPQQTG). The Peptidase A2 domain maps to 800-875 (FEGLVDTGAD…IPLNLWGRDL (76 aa)). Aspartate 805 is a catalytic residue. A G-patch domain is found at 890–936 (YSPTSQKIMTKRGYIPGKGLGKNEDGIKIPFEAKINQKREGIGYPFL).

Belongs to the beta type-B retroviral polymerase family. HERV class-II K(HML-2) pol subfamily. Post-translationally, myristoylation is essential for retroviral assembly. Alteration of the glycine residue leads to a block in the budding of particles and an accumulation of Gag inside the cell. Specific enzymatic cleavages may yield mature proteins.

Its subcellular location is the cell membrane. The catalysed reaction is Processing at the authentic HIV-1 PR recognition site and release of the mature p17 matrix and the p24 capsid protein, as a result of the cleavage of the -SQNY-|-PIVQ- cleavage site.. The enzyme catalyses DNA(n) + a 2'-deoxyribonucleoside 5'-triphosphate = DNA(n+1) + diphosphate. It carries out the reaction Endonucleolytic cleavage to 5'-phosphomonoester.. Its function is as follows. The products of the Gag polyproteins of infectious retroviruses perform highly complex orchestrated tasks during the assembly, budding, maturation, and infection stages of the viral replication cycle. During viral assembly, the proteins form membrane associations and self-associations that ultimately result in budding of an immature virion from the infected cell. Gag precursors also function during viral assembly to selectively bind and package two plus strands of genomic RNA. Endogenous Gag proteins may have kept, lost or modified their original function during evolution. Functionally, early post-infection, the reverse transcriptase converts the viral RNA genome into double-stranded viral DNA. The RNase H domain of the reverse transcriptase performs two functions. It degrades the RNA template and specifically removes the RNA primer from the RNA/DNA hybrid. Following nuclear import, the integrase catalyzes the insertion of the linear, double-stranded viral DNA into the host cell chromosome. Endogenous Pol proteins may have kept, lost or modified their original function during evolution. The polypeptide is Endogenous retrovirus group K member 9 Pol protein (ERVK-9) (Homo sapiens (Human)).